We begin with the raw amino-acid sequence, 329 residues long: L-lactate dehydrogenase (329 aa).

NAD(+)-binding positions include Val-18, Glu-39, Lys-46, Tyr-71, and 85–86 (GA). Residues Gln-88 and Arg-94 each contribute to the substrate site. NAD(+) is bound by residues Ser-107, 124-126 (AAN), and Ser-149. 126–129 (NPVD) is a binding site for substrate. 154–157 (DSAR) is a substrate binding site. The beta-D-fructose 1,6-bisphosphate site is built by Arg-159 and His-174. The active-site Proton acceptor is His-181. The residue at position 226 (Tyr-226) is a Phosphotyrosine. A substrate-binding site is contributed by Thr-235.

This sequence belongs to the LDH/MDH superfamily. LDH family. Homotetramer.

Its subcellular location is the cytoplasm. It carries out the reaction (S)-lactate + NAD(+) = pyruvate + NADH + H(+). The protein operates within fermentation; pyruvate fermentation to lactate; (S)-lactate from pyruvate: step 1/1. With respect to regulation, allosterically activated by fructose 1,6-bisphosphate (FBP). Functionally, catalyzes the conversion of lactate to pyruvate. The polypeptide is L-lactate dehydrogenase (Streptococcus agalactiae serotype V (strain ATCC BAA-611 / 2603 V/R)).